We begin with the raw amino-acid sequence, 576 residues long: Putative export ATP-binding/permease protein RP696 (576 aa).

Residues 20–303 (LIIVMISLLS…IFELLSEMHL (284 aa)) form the ABC transmembrane type-1 domain. 6 helical membrane passes run 21-41 (IIVM…GSIF), 61-81 (ILYI…RSYF), 135-155 (FLSF…LMFF), 158-178 (FKLA…LIKF), 242-262 (ALFF…IVWI), and 277-297 (IISF…IFEL). Positions 336–572 (IEFKNVDFTY…SEIYRNICRE (237 aa)) constitute an ABC transporter domain. 371 to 378 (GRSGAGKS) contributes to the ATP binding site.

It belongs to the ABC transporter superfamily. In terms of assembly, homodimer.

The protein resides in the cell inner membrane. Functionally, part of an ABC transporter complex. Transmembrane domains (TMD) form a pore in the inner membrane and the ATP-binding domain (NBD) is responsible for energy generation. This chain is Putative export ATP-binding/permease protein RP696, found in Rickettsia prowazekii (strain Madrid E).